The primary structure comprises 338 residues: Probable arabinan endo-1,5-alpha-L-arabinosidase A (338 aa).

The N-terminal stretch at methionine 1–alanine 20 is a signal peptide. Aspartate 33 (proton acceptor) is an active-site residue. Residue glutamate 217 is the Proton donor of the active site.

The protein belongs to the glycosyl hydrolase 43 family.

Its subcellular location is the secreted. It carries out the reaction Endohydrolysis of (1-&gt;5)-alpha-arabinofuranosidic linkages in (1-&gt;5)-arabinans.. Its pathway is glycan metabolism; L-arabinan degradation. Endo-1,5-alpha-L-arabinanase involved in degradation of pectin. Its preferred substrate is linear 1,5-alpha-L-arabinan. The chain is Probable arabinan endo-1,5-alpha-L-arabinosidase A (abnA) from Aspergillus terreus (strain NIH 2624 / FGSC A1156).